Reading from the N-terminus, the 451-residue chain is Bifunctional protein GlmU (451 aa).

Residues 1–229 (MQRHAIILAA…FDEIIGVNDR (229 aa)) are pyrophosphorylase. UDP-N-acetyl-alpha-D-glucosamine is bound by residues 8 to 11 (LAAG), K22, Q72, and 77 to 78 (GT). Residue D102 participates in Mg(2+) binding. Positions 139, 154, and 227 each coordinate UDP-N-acetyl-alpha-D-glucosamine. N227 contacts Mg(2+). The segment at 230 to 250 (LMLSEAEKALQQRINRYHMEN) is linker. The interval 251–451 (GVTIIDPSST…QVNKEGYLKK (201 aa)) is N-acetyltransferase. Residues R332 and K350 each contribute to the UDP-N-acetyl-alpha-D-glucosamine site. Residue H362 is the Proton acceptor of the active site. UDP-N-acetyl-alpha-D-glucosamine contacts are provided by Y365 and N376. Residues 385-386 (NY), A422, and R439 contribute to the acetyl-CoA site.

In the N-terminal section; belongs to the N-acetylglucosamine-1-phosphate uridyltransferase family. It in the C-terminal section; belongs to the transferase hexapeptide repeat family. Homotrimer. Requires Mg(2+) as cofactor.

The protein resides in the cytoplasm. It carries out the reaction alpha-D-glucosamine 1-phosphate + acetyl-CoA = N-acetyl-alpha-D-glucosamine 1-phosphate + CoA + H(+). It catalyses the reaction N-acetyl-alpha-D-glucosamine 1-phosphate + UTP + H(+) = UDP-N-acetyl-alpha-D-glucosamine + diphosphate. Its pathway is nucleotide-sugar biosynthesis; UDP-N-acetyl-alpha-D-glucosamine biosynthesis; N-acetyl-alpha-D-glucosamine 1-phosphate from alpha-D-glucosamine 6-phosphate (route II): step 2/2. It participates in nucleotide-sugar biosynthesis; UDP-N-acetyl-alpha-D-glucosamine biosynthesis; UDP-N-acetyl-alpha-D-glucosamine from N-acetyl-alpha-D-glucosamine 1-phosphate: step 1/1. The protein operates within bacterial outer membrane biogenesis; LPS lipid A biosynthesis. Catalyzes the last two sequential reactions in the de novo biosynthetic pathway for UDP-N-acetylglucosamine (UDP-GlcNAc). The C-terminal domain catalyzes the transfer of acetyl group from acetyl coenzyme A to glucosamine-1-phosphate (GlcN-1-P) to produce N-acetylglucosamine-1-phosphate (GlcNAc-1-P), which is converted into UDP-GlcNAc by the transfer of uridine 5-monophosphate (from uridine 5-triphosphate), a reaction catalyzed by the N-terminal domain. This is Bifunctional protein GlmU from Staphylococcus epidermidis (strain ATCC 35984 / DSM 28319 / BCRC 17069 / CCUG 31568 / BM 3577 / RP62A).